The primary structure comprises 124 residues: MARLVGVDLPRDKRMEIALTYIYGIGRTRSNEILAATGIDKNMRTKDLTDDQVTVLRDYIEGNLKVEGDLRREVQADIRRKIEIGCYQGLRHRRGLPVRGQRTKTNARTRKGPKRTIAGKKKAR.

The interval 95 to 124 is disordered; the sequence is GLPVRGQRTKTNARTRKGPKRTIAGKKKAR.

The protein belongs to the universal ribosomal protein uS13 family. As to quaternary structure, part of the 30S ribosomal subunit. Forms a loose heterodimer with protein S19. Forms two bridges to the 50S subunit in the 70S ribosome.

Its function is as follows. Located at the top of the head of the 30S subunit, it contacts several helices of the 16S rRNA. In the 70S ribosome it contacts the 23S rRNA (bridge B1a) and protein L5 of the 50S subunit (bridge B1b), connecting the 2 subunits; these bridges are implicated in subunit movement. Contacts the tRNAs in the A and P-sites. This chain is Small ribosomal subunit protein uS13, found in Mycolicibacterium smegmatis (strain ATCC 700084 / mc(2)155) (Mycobacterium smegmatis).